Reading from the N-terminus, the 321-residue chain is MGTNGVRVFVILYLLAVCGCIEYDVDDNVHICTHTNVSHINHTSWYYNDKVIALATEDKTSGYISSFIKRVNISLTCLNISSLRYEDSGTYKGVSHLKDGVIVTTTMNISVKANIVDLTGRVRYLTRNYCEVKIRCEITSFALNGSTTPPHMILGTVDKWKYLPFPTDDYRYVGELKRYISGNPYPTESLALEISSTFNRFTIVKNLNDDEFSCYLFSQNYSFHKMLNVRNICESKWKALNNNDNASSMPASHNNLANDLSSMMSQLQNDNDDNNDYSAPMNVDNLIMIVLITMLSIILVIIVVIAAISIYKRSKYRHIDN.

Positions 1–20 are cleaved as a signal peptide; the sequence is MGTNGVRVFVILYLLAVCGC. Residues Asn36, Asn41, Asn72, Asn79, Asn108, Asn144, Asn220, and Asn245 are each glycosylated (N-linked (GlcNAc...) asparagine; by host). Residues 286–306 form a helical membrane-spanning segment; that stretch reads LIMIVLITMLSIILVIIVVIA.

Belongs to the orthopoxvirus OPG049 family.

It localises to the host cell membrane. Its function is as follows. Plays a role in the spread of virus to neighboring cells ex vivo. This Homo sapiens (Human) protein is Protein OPG049 (OPG049).